The following is a 397-amino-acid chain: Argininosuccinate synthase (397 aa).

7 to 15 is an ATP binding site; it reads AFSGGLDTT. Tyr-84 provides a ligand contact to L-citrulline. Gly-114 contributes to the ATP binding site. Thr-116, Asn-120, and Asp-121 together coordinate L-aspartate. L-citrulline is bound at residue Asn-120. L-citrulline-binding residues include Arg-124, Ser-170, Ser-179, Glu-254, and Tyr-266.

It belongs to the argininosuccinate synthase family. Type 1 subfamily. Homotetramer.

The protein resides in the cytoplasm. It catalyses the reaction L-citrulline + L-aspartate + ATP = 2-(N(omega)-L-arginino)succinate + AMP + diphosphate + H(+). The protein operates within amino-acid biosynthesis; L-arginine biosynthesis; L-arginine from L-ornithine and carbamoyl phosphate: step 2/3. In Haloquadratum walsbyi (strain DSM 16790 / HBSQ001), this protein is Argininosuccinate synthase.